The chain runs to 511 residues: GMP synthase [glutamine-hydrolyzing] (511 aa).

The Glutamine amidotransferase type-1 domain maps to 5 to 195 (DIIVLDFGSQ…AKYICDCEST (191 aa)). Residue C82 is the Nucleophile of the active site. Active-site residues include H169 and E171. Residues 196-386 (WNMGNFAKIK…LGLSPDLVYR (191 aa)) enclose the GMPS ATP-PPase domain. An ATP-binding site is contributed by 223–229 (SGGVDSS).

As to quaternary structure, homodimer.

It carries out the reaction XMP + L-glutamine + ATP + H2O = GMP + L-glutamate + AMP + diphosphate + 2 H(+). Its pathway is purine metabolism; GMP biosynthesis; GMP from XMP (L-Gln route): step 1/1. Functionally, catalyzes the synthesis of GMP from XMP. The sequence is that of GMP synthase [glutamine-hydrolyzing] from Campylobacter hominis (strain ATCC BAA-381 / DSM 21671 / CCUG 45161 / LMG 19568 / NCTC 13146 / CH001A).